Reading from the N-terminus, the 359-residue chain is Nicotinate-nucleotide--dimethylbenzimidazole phosphoribosyltransferase (359 aa).

The active-site Proton acceptor is Glu-318.

It belongs to the CobT family. In terms of assembly, homodimer.

It catalyses the reaction 5,6-dimethylbenzimidazole + nicotinate beta-D-ribonucleotide = alpha-ribazole 5'-phosphate + nicotinate + H(+). It participates in nucleoside biosynthesis; alpha-ribazole biosynthesis; alpha-ribazole from 5,6-dimethylbenzimidazole: step 1/2. Catalyzes the synthesis of alpha-ribazole-5'-phosphate from nicotinate mononucleotide (NAMN) and 5,6-dimethylbenzimidazole (DMB). In Escherichia coli O9:H4 (strain HS), this protein is Nicotinate-nucleotide--dimethylbenzimidazole phosphoribosyltransferase.